A 185-amino-acid chain; its full sequence is Ribosome-recycling factor (185 aa).

Belongs to the RRF family.

The protein localises to the cytoplasm. In terms of biological role, responsible for the release of ribosomes from messenger RNA at the termination of protein biosynthesis. May increase the efficiency of translation by recycling ribosomes from one round of translation to another. This chain is Ribosome-recycling factor, found in Streptococcus thermophilus (strain ATCC BAA-491 / LMD-9).